We begin with the raw amino-acid sequence, 214 residues long: Orotate phosphoribosyltransferase (214 aa).

Lys-26 contacts 5-phospho-alpha-D-ribose 1-diphosphate. 34 to 35 (FF) lines the orotate pocket. 5-phospho-alpha-D-ribose 1-diphosphate-binding positions include 72–73 (YK), Arg-99, Lys-100, Lys-103, His-105, and 124–132 (DDVITAGTA). Orotate-binding residues include Thr-128 and Arg-156.

This sequence belongs to the purine/pyrimidine phosphoribosyltransferase family. PyrE subfamily. As to quaternary structure, homodimer. The cofactor is Mg(2+).

It carries out the reaction orotidine 5'-phosphate + diphosphate = orotate + 5-phospho-alpha-D-ribose 1-diphosphate. It participates in pyrimidine metabolism; UMP biosynthesis via de novo pathway; UMP from orotate: step 1/2. In terms of biological role, catalyzes the transfer of a ribosyl phosphate group from 5-phosphoribose 1-diphosphate to orotate, leading to the formation of orotidine monophosphate (OMP). This is Orotate phosphoribosyltransferase from Pasteurella multocida (strain Pm70).